A 335-amino-acid polypeptide reads, in one-letter code: Ubiquinone biosynthesis protein COQ4, mitochondrial (335 aa).

The transit peptide at 1 to 10 (MLRLSLLRST) directs the protein to the mitochondrion. H210, D211, H214, and E226 together coordinate Zn(2+).

This sequence belongs to the COQ4 family. Component of a multi-subunit COQ enzyme complex, composed of at least COQ3, COQ4, COQ5, COQ6, COQ7 and COQ9. Interacts with COQ3. It depends on Zn(2+) as a cofactor.

The protein resides in the mitochondrion inner membrane. The enzyme catalyses 4-hydroxy-3-methoxy-5-(all-trans-hexaprenyl)benzoate + H(+) = 2-methoxy-6-(all-trans-hexaprenyl)phenol + CO2. Its pathway is cofactor biosynthesis; ubiquinone biosynthesis. In terms of biological role, lyase that catalyzes the C1-decarboxylation of 4-hydroxy-3-methoxy-5-(all-trans-hexaprenyl)benzoic acid into 2-methoxy-6-(all-trans-hexaprenyl)phenol during ubiquinone biosynthesis. The polypeptide is Ubiquinone biosynthesis protein COQ4, mitochondrial (Saccharomyces cerevisiae (strain AWRI1631) (Baker's yeast)).